The chain runs to 1506 residues: Transient receptor potential cation channel subfamily M member 2 (1506 aa).

A compositionally biased stretch (basic and acidic residues) spans 1–11 (MESLDRRRTGS). The disordered stretch occupies residues 1 to 22 (MESLDRRRTGSEQEEGFGVQSR). Residues 1–750 (MESLDRRRTG…WWGQLCVDNG (750 aa)) are Cytoplasmic-facing. The ADP-D-ribose site is built by threonine 173, asparagine 178, arginine 301, glycine 332, and threonine 335. Threonine 738 carries the phosphothreonine modification. The stretch at 751-767 (LWRIILCMLAFPLLFTG) is an intramembrane region. The Cytoplasmic segment spans residues 768-792 (FISFREKRLQALCRPARVRAFFNAP). Residues 793–813 (VVIFHMNILSYFAFLCLFAYV) traverse the membrane as a helical segment. Topologically, residues 814–824 (LMVDFQPSPSW) are extracellular. A helical membrane pass occupies residues 825 to 845 (CEYLIYLWLFSLVCEETRQLF). Ca(2+) is bound by residues glutamate 840 and glutamine 843. Over 846–864 (YDPDGCGLMKMASLYFSDF) the chain is Cytoplasmic. A helical membrane pass occupies residues 865–885 (WNKLDVGAILLFIVGLTCRLI). Position 866 (asparagine 866) interacts with Ca(2+). The Extracellular portion of the chain corresponds to 886 to 893 (PATLYPGR). The chain crosses the membrane as a helical span at residues 894–914 (IILSLDFIMFCLRLMHIFTIS). At 915 to 926 (KTLGPKIIIVKR) the chain is on the cytoplasmic side. The helical transmembrane segment at 927–947 (MMKDVFFFLFLLAVWVVSFGV) threads the bilayer. Topologically, residues 948 to 967 (AKQAILIHNESRVDWIFRGV) are extracellular. Positions 968–982 (VYHSYLTIFGQIPTY) form an intramembrane region, pore-forming. A Selectivity filter motif is present at residues 976 to 979 (FGQI). Over 983-1019 (IDGVNFSMDQCSPNGTDPYKPKCPESDWTGQAPAFPE) the chain is Extracellular. Cysteine 993 and cysteine 1005 form a disulfide bridge. Residues 1020 to 1041 (WLTVTLLCLYLLFANILLLNLL) traverse the membrane as a helical segment. The Cytoplasmic portion of the chain corresponds to 1042–1076 (IAMFNYTFQEVQEHTDQIWKFQRHDLIEEYHGRPP). Glutamate 1070 provides a ligand contact to Ca(2+). Residues 1077-1095 (APPPLILLSHLQLLIKRIV) lie within the membrane without spanning it. Residues 1096-1506 (LKIPAKRHKQ…KVASLFGAHF (411 aa)) are Cytoplasmic-facing. One can recognise a Nudix hydrolase domain in the interval 1350 to 1501 (RWKRNQGGAI…KTILQKVASL (152 aa)). Serine 1378 contacts ADP-D-ribose. Positions 1386 to 1407 (GSREPGEMLPRKLKRVLRQEFW) match the Nudix box motif. Positions 1427, 1429, 1488, and 1490 each coordinate ADP-D-ribose.

Belongs to the transient receptor (TC 1.A.4) family. LTrpC subfamily. TRPM2 sub-subfamily. As to quaternary structure, homotetramer. Protein kinase C (PKC)-mediated phosphorylation of TRPM2 at Thr-738 counteracts the effect of cytosolic Ca(2+) and elevates the temperature threshold. As to expression, detected in the preoptic area of the hypothalamus, a brain area involved in body temperature control. Detected in beta-cells in pancreas islets (at protein level). Detected in brain cortex, striatum, hippocampus CA1, CA2 and CA3 layers, and in the Purkinje cell layer in cerebellum. Widely expressed, with highest levels in lung, spleen, eye and brain. Detected in dendritic cells and in polymorphonuclear neutrophils.

The protein localises to the cell membrane. The protein resides in the perikaryon. It is found in the cell projection. Its subcellular location is the cytoplasmic vesicle. It localises to the lysosome. The enzyme catalyses Ca(2+)(in) = Ca(2+)(out). It carries out the reaction Na(+)(in) = Na(+)(out). With respect to regulation, activated by intracellular ADP-ribose, beta-NAD (NAD(+)) and similar compounds, and by oxidative stress caused by reactive oxygen or nitrogen species. Ca(2+) and PI(4,5)P2 are required for channel opening by ADP-ribose. Activated by moderate heat (35 to 40 degrees Celsius). Activation by ADP-ribose and beta-NAD is strongly increased by moderate heat (35 to 40 degrees Celsius). Likewise, reactive oxygen species lower the threshold for activation by moderate heat (37 degrees Celsius). Inactivated by exposure to extracellular pH between 4.0 and 6.5; irreversibly inactivated when open channels are exposed to extracellular pH between 4.0 and 6.5, while pre-exposure of closed channels to extracellular pH 5.5 gives rise to currents that rapidly inactivate, but protects against irreversible inactivation. Inactivated by intracellular ATP. Activated by arachidonic acid. Inhibited by 2-aminoethyl diphenylborinate (2-APB). In terms of biological role, nonselective, voltage-independent cation channel that mediates Na(+) and Ca(2+) influx, leading to increased cytoplasmic Ca(2+) levels. Functions as a ligand-gated ion channel, gated by intracellular adenosine diphosphate ribose (ADP-ribose), Ca(2+), warm temperature, and oxidative stress. The precise physiological activators are under debate; the true, physiological activators may be ADP-ribose and ADP-ribose-2'-phosphate. Binding of ADP-ribose to the cytoplasmic Nudix domain causes a conformation change; the channel is primed but still requires Ca(2+) binding to trigger channel opening. Extracellular Ca(2+) passes through the channel and increases channel activity. Also contributes to Ca(2+) release from intracellular stores in response to ADP-ribose. Plays a role in numerous processes that involve signaling via intracellular Ca(2+) levels. Besides, mediates the release of lysosomal Zn(2+) stores in response to reactive oxygen species, leading to increased cytosolic Zn(2+) levels. Plays a role in mediating behavorial and physiological responses to moderate heat and thereby contributes to body temperature homeostasis. Plays a role in insulin secretion, a process that requires increased cytoplasmic Ca(2+) levels. Required for normal IFNG and cytokine secretion and normal innate immune immunity in response to bacterial infection. Required for normal phagocytosis and cytokine release by macrophages exposed to zymosan (in vitro). Plays a role in dendritic cell differentiation and maturation, and in dendritic cell chemotaxis via its role in regulating cytoplasmic Ca(2+) levels. Plays a role in the regulation of the reorganization of the actin cytoskeleton and filopodia formation in response to reactive oxygen species via its function in increasing cytoplasmic Ca(2+) and Zn(2+) levels. Confers susceptibility to cell death following oxidative stress. The polypeptide is Transient receptor potential cation channel subfamily M member 2 (Trpm2) (Mus musculus (Mouse)).